The sequence spans 1131 residues: MASATTNQGNEWRFVAPININTTTENTVSCVKFDPHEDLFWIGSSTGKVTSLLPTNHFTRYSAFVVSNISGVHSLEPTESLIFTLSDTMLRATTRQGIPVAKFTSPSMTKMAASCHMPGTSTFIMGGFQEKLIHYDFVKEKEIRTTELKASENAIIIRYNGTNTFTADTRGNVFVKNSKNCETIHTLDCHQDQVLDFDVQGNKLITCGVSMNRLKNMDQFIKVYDLRMYKALSPIGMPYLPQFARFMPSYCERVCVTYQTMYNQPGQTATWSNHPAGVKMFDLNSNGNSAEFPIETSLISAFDFSSNKNFIAVGNHCGIVNVFADRDQPQVNENSKETVFAAPPVQPPLSFAIDDTTQTFGSIPLGFSQEPLVSDWPTELTQIVYRRRKPPTEQTNVKSIHYLSQIKNPRINSKLKRHNIVPYFFEQEELIEASNDHGSKEEAPQEMKRIKVSKLYKKRPLIVNQVPARRGNSQDETQETYTWNIIRHVTMQSTHGMNLVANTLVQVAYSLSPIRSIVLRHICTEDSCITCELHFLFTAFSSKIGDNSGMLTNNLAWALARNGVSLKAGGVLSATQQIIKTVIDDVARTDASGSICSKFDRHLRCIRCRGLQQQESVTDHLLKLNYAPVYQASLCQLIEKSLHIGDDSGEIECEDCKQMSRMECKRKVRELSPVLLIDTNASSNGFVEFWRRQLSLFERKPGGNRSSALGTVPESPSEKKNCRFGTDCRNKKTCKFVHGLVDWPAEQTKLLEDVDLPEWAHYIPSRIAAQLCEGIVRLSDVSDLPDYDEPSAVIYELDAMIHAVGNGENDVNWTHPVTLLRESPVISSSWTLINEQLVSRLHDHEARHIDGRWKLPALLAYKKKNFDVKTSEDIISNDLFLAEENLASNGMTSLAVQSLEELPKEKELVGLDAEFIKIKTDLLEFDGKTVQMRAVGRASCVDSTGERIIFDDHVKLTDDVEVVDYLTKFSGIVKADLCPTTSEKYLTTHKRLLLRMHVLIQRGVTFVGHALHNDFTVLNVHVAESQIIDTVTLMRLGTQRMLSLQFLVKEILGETIQMEAHDSVVDARYALKLYRKYLEIKEQGLLGSEMRRIYTILPCPSPNQTSSPLVVSTTRKTPEDTNPADAAPKSV.

The 376-residue stretch at 489-864 (VTMQSTHGMN…LPALLAYKKK (376 aa)) folds into the USP domain. An Exonuclease domain is found at 909–1074 (VGLDAEFIKI…VDARYALKLY (166 aa)). The segment covering 1104–1115 (QTSSPLVVSTTR) has biased composition (polar residues). Residues 1104-1131 (QTSSPLVVSTTRKTPEDTNPADAAPKSV) are disordered.

The chain is PolyA-specific ribonuclease subunit panl-2 from Caenorhabditis elegans.